Here is a 291-residue protein sequence, read N- to C-terminus: Zinc transporter ZupT (291 aa).

8 consecutive transmembrane segments (helical) span residues 8–28, 39–59, 74–94, 147–167, 174–194, 209–229, 233–253, and 271–291; these read IFIA…GSII, VLSL…FMEI, HWAE…SLLI, GIFT…ATFI, TLGI…GLAV, FIYS…GALI, FIGD…MVFI, and SLYG…LLGQ. Fe(2+) contacts are provided by Asn-158 and Glu-161. Residues Glu-161 and His-186 each contribute to the Zn(2+) site. Positions 187, 190, and 219 each coordinate Fe(2+). A Zn(2+)-binding site is contributed by Glu-190.

The protein belongs to the ZIP transporter (TC 2.A.5) family. ZupT subfamily.

The protein localises to the cell inner membrane. It carries out the reaction Zn(2+)(in) = Zn(2+)(out). Mediates zinc uptake. May also transport other divalent cations. The polypeptide is Zinc transporter ZupT (Campylobacter jejuni subsp. jejuni serotype O:2 (strain ATCC 700819 / NCTC 11168)).